The sequence spans 424 residues: CinA-like protein (424 aa).

The protein belongs to the CinA family.

The polypeptide is CinA-like protein (Shewanella woodyi (strain ATCC 51908 / MS32)).